A 190-amino-acid chain; its full sequence is MMIESSSQDVASLVIALRQQQVIAYPTEAVFGLGCNPDSESAVQALLALKQRPWQKGLILVAAHYAQLKEYIDDDALDDAARSRIFASWPGPVTWVIPVCPTTPSWLTGQHASLAVRVSAFEPVRRLCLAFGKPLVSTSANLTGQPPARSADEVRGQLGAAFLVLDEAVEGRLNPTEIRDALSGELIRQG.

Residues 7 to 190 (SQDVASLVIA…ALSGELIRQG (184 aa)) enclose the YrdC-like domain.

This sequence belongs to the SUA5 family. TsaC subfamily.

It is found in the cytoplasm. The catalysed reaction is L-threonine + hydrogencarbonate + ATP = L-threonylcarbamoyladenylate + diphosphate + H2O. In terms of biological role, required for the formation of a threonylcarbamoyl group on adenosine at position 37 (t(6)A37) in tRNAs that read codons beginning with adenine. Catalyzes the conversion of L-threonine, HCO(3)(-)/CO(2) and ATP to give threonylcarbamoyl-AMP (TC-AMP) as the acyladenylate intermediate, with the release of diphosphate. In Sodalis glossinidius (strain morsitans), this protein is Threonylcarbamoyl-AMP synthase.